We begin with the raw amino-acid sequence, 526 residues long: Carotenoid cleavage oxygenase 1 (526 aa).

The segment at 1–33 (MAEYVFSDAPKDSHGNGVKDAVPGKQPEELPPA) is disordered. Residues Y133 and K164 each coordinate piceatannol. Residues Y133 and K164 each coordinate trans-resveratrol. The Fe cation site is built by H197, H248, and H313. E383 is a binding site for piceatannol. E383 serves as a coordination point for trans-resveratrol. Residue H510 coordinates Fe cation.

Belongs to the carotenoid oxygenase family. Requires Fe(2+) as cofactor.

The catalysed reaction is trans-resveratrol + O2 = 3,5-dihydroxybenzaldehyde + 4-hydroxybenzaldehyde. It catalyses the reaction piceatannol + O2 = 3,5-dihydroxybenzaldehyde + 3,4-dihydroxybenzaldehyde. Its function is as follows. Dioxygenase that cleaves the interphenyl C-alpha-C-beta double bond of resveratrol to yield 3,5-dihydroxybenzaldehyde and 4-hydroxybenzaldehyde. Also cleaves piceatannol, a compound that differs from resveratrol only in the occurrence of an additional hydroxyl group, which leads to the production of 3,4-dihydroxybenzaldehyde and 3,5-hydroxybenzaldehyde. Is not able to cleave trans-stilbene, 4-monohydroxy-trans-stilbene, 3,5-dihydroxy-trans-stilbene (pinosylvin), trismethoxy-resveratrol, and 3,3',5-trihydroxy-4'-methoxystilbene-3-O-beta-D-glucoside. Is not involved in carotenoid metabolism. The protein is Carotenoid cleavage oxygenase 1 of Neurospora crassa (strain ATCC 24698 / 74-OR23-1A / CBS 708.71 / DSM 1257 / FGSC 987).